We begin with the raw amino-acid sequence, 335 residues long: Anthranilate phosphoribosyltransferase (335 aa).

Residues Gly-79, 82–83 (GD), Ser-87, 89–92 (NIST), 107–115 (KHGNRSISS), and Ser-119 contribute to the 5-phospho-alpha-D-ribose 1-diphosphate site. Gly-79 serves as a coordination point for anthranilate. Ser-91 is a binding site for Mg(2+). Asn-110 serves as a coordination point for anthranilate. Anthranilate is bound at residue Arg-165. Asp-224 and Glu-225 together coordinate Mg(2+).

It belongs to the anthranilate phosphoribosyltransferase family. In terms of assembly, homodimer. It depends on Mg(2+) as a cofactor.

The enzyme catalyses N-(5-phospho-beta-D-ribosyl)anthranilate + diphosphate = 5-phospho-alpha-D-ribose 1-diphosphate + anthranilate. It functions in the pathway amino-acid biosynthesis; L-tryptophan biosynthesis; L-tryptophan from chorismate: step 2/5. Functionally, catalyzes the transfer of the phosphoribosyl group of 5-phosphorylribose-1-pyrophosphate (PRPP) to anthranilate to yield N-(5'-phosphoribosyl)-anthranilate (PRA). The chain is Anthranilate phosphoribosyltransferase from Streptococcus mutans serotype c (strain ATCC 700610 / UA159).